The chain runs to 1172 residues: Phytochrome B (1172 aa).

The span at methionine 1–arginine 16 shows a compositional bias: gly residues. A disordered region spans residues methionine 1–methionine 54. Residues serine 24–methionine 54 show a composition bias toward polar residues. Residues aspartate 252–leucine 433 enclose the GAF domain. Cysteine 357 contacts phytochromobilin. PAS domains are found at residues valine 652–aspartate 723 and aspartate 786–leucine 857. The region spanning tyrosine 934 to arginine 1153 is the Histidine kinase domain.

It belongs to the phytochrome family. In terms of assembly, homodimer. Interacts with ADO1 and PKS4. Stabilized by interactions with PAPP5 and FYPP3 which are enhanced in the phosphorylated Pfr form. Interacts with VOZ1 and VOZ2. Binds, via its photosensory domain, to PTAC12/HMR/PAP5 when photoactivated; this interaction stimulates its localization to photobodies. Interacts with CRY1 specifically when in the dark/far-red (Pr) state, but not when red light-activated (Pfr). Interacts with PIF4 and PIF5 in response to low blue light (LBL). Component of a red light-dependent nuclear complex made of PHL, PHYB and CO. Interacts directly with PHL. Binds to UNE10/PIF8 when red light-activated (Pfr). When light-activated, interacts with PCH1 and PCHL. Associated with DRT111/RSN2/SFPS, SMP2 and SWAP1 in nuclear photobodies upon response to red light (Pfr form). Post-translationally, contains one covalently linked phytochromobilin chromophore. In terms of tissue distribution, expressed in fruits, flowers, leaves, stems, seedlings and roots.

It localises to the cytoplasm. The protein resides in the nucleus. Its subcellular location is the nucleoplasm. The protein localises to the nucleus speckle. Its function is as follows. Regulatory photoreceptor which exists in two forms that are reversibly interconvertible by light: the Pr form that absorbs maximally in the red region of the spectrum and the Pfr form that absorbs maximally in the far-red region. Photoconversion of Pr to Pfr induces an array of morphogenetic responses, whereas reconversion of Pfr to Pr cancels the induction of those responses. Pfr controls the expression of a number of nuclear genes including those encoding the small subunit of ribulose-bisphosphate carboxylase, chlorophyll A/B binding protein, protochlorophyllide reductase, rRNA, etc. It also controls the expression of its own gene(s) in a negative feedback fashion. Involved in the flowering time regulation. Involved in light-regulated circadian phase control that triggers stomatal aperture, stomatal conductance, and CO(2) assimilation. Implicated in red light perception, and, to a lower extent, in blue light signaling. Controls thermomorphogenesis in the daytime and regulates temperature responses by associating with the promoters of key target genes in a temperature-dependent manner and subsequently repressing their expression in a PIF4-dependent manner (temperature-responsive transcriptional regulator); this process requires PTAC12/HMR/PAP5 (transcriptional activator). Thermal timer that integrates temperature information over the course of the night. Detabilizes UNE10/PIF8 in red light. This chain is Phytochrome B, found in Arabidopsis thaliana (Mouse-ear cress).